Here is a 206-residue protein sequence, read N- to C-terminus: Large ribosomal subunit protein uL4 (206 aa).

The interval 63-85 is disordered; that stretch reads MYKQKGTGSARHGSARAPQFRGG.

The protein belongs to the universal ribosomal protein uL4 family. As to quaternary structure, part of the 50S ribosomal subunit.

In terms of biological role, one of the primary rRNA binding proteins, this protein initially binds near the 5'-end of the 23S rRNA. It is important during the early stages of 50S assembly. It makes multiple contacts with different domains of the 23S rRNA in the assembled 50S subunit and ribosome. Its function is as follows. Forms part of the polypeptide exit tunnel. This is Large ribosomal subunit protein uL4 from Beijerinckia indica subsp. indica (strain ATCC 9039 / DSM 1715 / NCIMB 8712).